Here is a 312-residue protein sequence, read N- to C-terminus: MSAALKPLAQLDTPRLTHLQRLEAESIHIMRETVAETENPVMLYSIGKDSSVLLHLALKAFAPGRLPFPLLHVDTTWKFREMIAFRDARAKELGLDLLVYTNPDGLARGIGPVSHGSEVHTDVMKTQALRQALDKYKFDAAFGGARRDEEASRAKERIVSLRTAQHRWDPKRQRAEPWHLYNLKKKRGESLRVFPLSNWTELDIWLYIEQERIPIVPLYFSAERPVVRRDGQLIMVDDERLPLEPGETPELRKVRFRTLGCYPLTGAVESDAATLPEIIGETLAARTSERQGRVIDKDGAGAMERKKQEGYF.

It belongs to the PAPS reductase family. CysD subfamily. Heterodimer composed of CysD, the smaller subunit, and CysN.

It carries out the reaction sulfate + ATP + H(+) = adenosine 5'-phosphosulfate + diphosphate. Its pathway is sulfur metabolism; hydrogen sulfide biosynthesis; sulfite from sulfate: step 1/3. With CysN forms the ATP sulfurylase (ATPS) that catalyzes the adenylation of sulfate producing adenosine 5'-phosphosulfate (APS) and diphosphate, the first enzymatic step in sulfur assimilation pathway. APS synthesis involves the formation of a high-energy phosphoric-sulfuric acid anhydride bond driven by GTP hydrolysis by CysN coupled to ATP hydrolysis by CysD. The polypeptide is Sulfate adenylyltransferase subunit 2 (Methylobacterium nodulans (strain LMG 21967 / CNCM I-2342 / ORS 2060)).